The primary structure comprises 145 residues: Large ribosomal subunit protein uL15 (145 aa).

Residues 1–55 (MSLLKTLAPKAGSKHAPKRIGRGIGSGMGGTATKGHKGQLARTGGTVRRGFEGGQ) form a disordered region. Positions 12–21 (GSKHAPKRIG) are enriched in basic residues. Gly residues predominate over residues 22 to 32 (RGIGSGMGGTA).

This sequence belongs to the universal ribosomal protein uL15 family. In terms of assembly, part of the 50S ribosomal subunit.

Its function is as follows. Binds to the 23S rRNA. This chain is Large ribosomal subunit protein uL15, found in Bdellovibrio bacteriovorus (strain ATCC 15356 / DSM 50701 / NCIMB 9529 / HD100).